Here is a 365-residue protein sequence, read N- to C-terminus: Cobalt-precorrin-5B C(1)-methyltransferase (365 aa).

The protein belongs to the CbiD family.

It catalyses the reaction Co-precorrin-5B + S-adenosyl-L-methionine = Co-precorrin-6A + S-adenosyl-L-homocysteine. It participates in cofactor biosynthesis; adenosylcobalamin biosynthesis; cob(II)yrinate a,c-diamide from sirohydrochlorin (anaerobic route): step 6/10. Functionally, catalyzes the methylation of C-1 in cobalt-precorrin-5B to form cobalt-precorrin-6A. This chain is Cobalt-precorrin-5B C(1)-methyltransferase, found in Polaromonas naphthalenivorans (strain CJ2).